A 73-amino-acid polypeptide reads, in one-letter code: UPF0346 protein lp_1865 (73 aa).

This sequence belongs to the UPF0346 family.

In Lactiplantibacillus plantarum (strain ATCC BAA-793 / NCIMB 8826 / WCFS1) (Lactobacillus plantarum), this protein is UPF0346 protein lp_1865.